Here is a 690-residue protein sequence, read N- to C-terminus: eEF1A lysine and N-terminal methyltransferase (690 aa).

Positions 427-451 are disordered; sequence AAASSASKKKNKKKAKQPASTGAKD. The span at 433 to 442 shows a compositional bias: basic residues; sequence SKKKNKKKAK.

It belongs to the methyltransferase superfamily.

The enzyme catalyses L-lysyl-[protein] + S-adenosyl-L-methionine = N(6)-methyl-L-lysyl-[protein] + S-adenosyl-L-homocysteine + H(+). The catalysed reaction is N(6)-methyl-L-lysyl-[protein] + S-adenosyl-L-methionine = N(6),N(6)-dimethyl-L-lysyl-[protein] + S-adenosyl-L-homocysteine + H(+). It carries out the reaction N-terminal glycyl-L-lysyl-L-glutamyl-[protein] + 3 S-adenosyl-L-methionine = N-terminal N,N,N-trimethyl-glycyl-L-lysyl-L-glutamyl-[protein] + 3 S-adenosyl-L-homocysteine + 3 H(+). Its function is as follows. Dual methyltransferase that catalyzes methylation of elongation factor 1-alpha (eef1a1 and eef1a2) at two different positions, and is therefore involved in the regulation of mRNA translation. Via its C-terminus, methylates the N-terminus of eef1a1 and eef1a2. Via its N-terminus dimethylates lysine residues of eef1a1 and eef1a2. This chain is eEF1A lysine and N-terminal methyltransferase (mettl13), found in Danio rerio (Zebrafish).